A 1257-amino-acid chain; its full sequence is Phosphatidylinositol 3,4,5-trisphosphate 5-phosphatase 2 (1257 aa).

Positions 21 to 117 constitute an SH2 domain; sequence WYHRDLSRAA…GLVCALLLPV (97 aa). Residues 119–132 are compositionally biased toward basic and acidic residues; the sequence is GEREPDPPDDRDAS. A disordered region spans residues 119-181; sequence GEREPDPPDD…ESTPNGLSTV (63 aa). The residue at position 132 (Ser-132) is a Phosphoserine. Residues 156 to 166 are compositionally biased toward pro residues; it reads PSSPLPAPETP. Thr-165 is subject to Phosphothreonine. A phosphoserine mark is found at Ser-241 and Ser-353. Tyr-887 bears the Phosphotyrosine mark. Ser-891 bears the Phosphoserine mark. The tract at residues 897 to 986 is disordered; that stretch reads TGAKSKAPSV…PPKNSFNNPA (90 aa). Over residues 939–951 the composition is skewed to pro residues; it reads PPPTGRPPAPPRA. Positions 945–950 match the SH3-binding motif; the sequence is PPAPPR. Basic and acidic residues predominate over residues 952-966; that stretch reads VPREESLNPRLKSEG. Positions 984–987 match the NPXY motif motif; that stretch reads NPAY. A Phosphotyrosine modification is found at Tyr-987. Residues 1004–1115 form a disordered region; the sequence is SFARAPIPPT…PASTFLEEVA (112 aa). Pro residues-rich tracts occupy residues 1049–1060 and 1088–1104; these read LPPPDFPPPPLP and GPPP…PPGT. Phosphoserine is present on Ser-1132. Phosphotyrosine occurs at positions 1136 and 1161. One can recognise an SAM domain in the interval 1195 to 1257; it reads LGEAGMGAWL…LLLDTLQLSK (63 aa). At Ser-1256 the chain carries Phosphoserine.

It belongs to the inositol 1,4,5-trisphosphate 5-phosphatase family. As to quaternary structure, interacts with tyrosine phosphorylated form of SHC1. Interacts with EGFR. Upon stimulation by the EGF signaling pathway, it forms a complex with SHC1 and EGFR. Interacts with cytoskeletal protein SORBS3/vinexin, promoting its localization to the periphery of cells. Forms a complex with filamin (FLNA or FLNB), actin, GPIb (GP1BA or GP1BB) that regulates cortical and submembraneous actin. Interacts with c-Met/MET, when c-Met/MET is phosphorylated on 'Tyr-1356'. Interacts with p130Cas/BCAR1. Interacts with CENTD3/ARAP3 via its SAM domain. Interacts with c-Cbl/CBL and CAP/SORBS1. Interacts with activated EPHA2 receptor. Interacts with receptors FCGR2A. Interacts with FCGR2B. Interacts with tyrosine kinase ABL1. Interacts with tyrosine kinase TEC. Interacts with CSF1R. Interacts (via N-terminus) with SH3YL1 (via SH3 domain). Interacts (via SH2 domain) with tyrosine phosphorylated KLRC1 (via ITIM). Interacts with NEDD9/HEF1. Post-translationally, tyrosine phosphorylated by the members of the SRC family after exposure to a diverse array of extracellular stimuli such as insulin, growth factors such as EGF or PDGF, chemokines, integrin ligands and hypertonic and oxidative stress. May be phosphorylated upon IgG receptor FCGR2B-binding. Phosphorylated at Tyr-987 following cell attachment and spreading. Phosphorylated at Tyr-1161 following EGF signaling pathway stimulation.

The protein localises to the cytoplasm. Its subcellular location is the cytosol. It localises to the cytoskeleton. It is found in the membrane. The protein resides in the cell projection. The protein localises to the filopodium. Its subcellular location is the lamellipodium. It localises to the basal cell membrane. It is found in the nucleus. The protein resides in the nucleus speckle. The protein localises to the spindle pole. It catalyses the reaction a 1,2-diacyl-sn-glycero-3-phospho-(1D-myo-inositol-3,4,5-trisphosphate) + H2O = a 1,2-diacyl-sn-glycero-3-phospho-(1D-myo-inositol-3,4-bisphosphate) + phosphate. It carries out the reaction 1,2-dioctanoyl-sn-glycero-3-phospho-(1D-myo-inositol-3,4,5-trisphosphate) + H2O = 1,2-dioctanoyl-sn-glycero-3-phospho-(1D-myo-inositol-3,4-bisphosphate) + phosphate. The catalysed reaction is 1,2-dihexadecanoyl-sn-glycero-3-phospho-(1D-myo-inositol-3,4,5-trisphosphate) + H2O = 1,2-dihexadecanoyl-sn-glycero-3-phospho-(1D-myo-inositol-3,4-bisphosphate) + phosphate. Its activity is regulated as follows. Activated upon translocation to the sites of synthesis of PtdIns(3,4,5)P3 in the membrane. Enzymatic activity is enhanced in the presence of phosphatidylserine. Phosphatidylinositol (PtdIns) phosphatase that specifically hydrolyzes the 5-phosphate of phosphatidylinositol-3,4,5-trisphosphate (PtdIns(3,4,5)P3) to produce PtdIns(3,4)P2, thereby negatively regulating the PI3K (phosphoinositide 3-kinase) pathways. Required for correct mitotic spindle orientation and therefore progression of mitosis. Plays a central role in regulation of PI3K-dependent insulin signaling, although the precise molecular mechanisms and signaling pathways remain unclear. While overexpression reduces both insulin-stimulated MAP kinase and Akt activation, its absence does not affect insulin signaling or GLUT4 trafficking. Confers resistance to dietary obesity. May act by regulating AKT2, but not AKT1, phosphorylation at the plasma membrane. Part of a signaling pathway that regulates actin cytoskeleton remodeling. Required for the maintenance and dynamic remodeling of actin structures as well as in endocytosis, having a major impact on ligand-induced EGFR internalization and degradation. Participates in regulation of cortical and submembraneous actin by hydrolyzing PtdIns(3,4,5)P3 thereby regulating membrane ruffling. Regulates cell adhesion and cell spreading. Required for HGF-mediated lamellipodium formation, cell scattering and spreading. Acts as a negative regulator of EPHA2 receptor endocytosis by inhibiting via PI3K-dependent Rac1 activation. Acts as a regulator of neuritogenesis by regulating PtdIns(3,4,5)P3 level and is required to form an initial protrusive pattern, and later, maintain proper neurite outgrowth. Acts as a negative regulator of the FC-gamma-RIIA receptor (FCGR2A). Mediates signaling from the FC-gamma-RIIB receptor (FCGR2B), playing a central role in terminating signal transduction from activating immune/hematopoietic cell receptor systems. Involved in EGF signaling pathway. Upon stimulation by EGF, it is recruited by EGFR and dephosphorylates PtdIns(3,4,5)P3. Plays a negative role in regulating the PI3K-PKB pathway, possibly by inhibiting PKB activity. Down-regulates Fc-gamma-R-mediated phagocytosis in macrophages independently of INPP5D/SHIP1. In macrophages, down-regulates NF-kappa-B-dependent gene transcription by regulating macrophage colony-stimulating factor (M-CSF)-induced signaling. Plays a role in the localization of AURKA and NEDD9/HEF1 to the basolateral membrane at interphase in polarized cysts, thereby mediates cell cycle homeostasis, cell polarization and cilia assembly. Additionally promotion of cilia growth is also facilitated by hydrolysis of (PtdIns(3,4,5)P3) to PtdIns(3,4)P2. Promotes formation of apical membrane-initiation sites during the initial stages of lumen formation via Rho family-induced actin filament organization and CTNNB1 localization to cell-cell contacts. May also hydrolyze PtdIns(1,3,4,5)P4, and could thus affect the levels of the higher inositol polyphosphates like InsP6. Involved in endochondral ossification. This chain is Phosphatidylinositol 3,4,5-trisphosphate 5-phosphatase 2, found in Rattus norvegicus (Rat).